The sequence spans 223 residues: Kinetochore protein Spc25 (223 aa).

A coiled-coil region spans residues 65–115; the sequence is LRCGELEKRANFMEELTQELEATKQRNLVMRDQIKQLNVLARQHRNEVMES.

The protein belongs to the SPC25 family. Component of the Ndc80 complex, which is composed of Ndc80, Nuf2 and Spc25.

It is found in the nucleus. The protein resides in the chromosome. The protein localises to the centromere. It localises to the kinetochore. Its function is as follows. Acts as a component of the essential kinetochore-associated Ndc80 complex, which is required for chromosome segregation and spindle checkpoint activity during meiosis and mitosis. Required for kinetochore integrity and the organization of stable microtubule binding sites in the outer plate of the kinetochore. Participates in SAC signaling that responds specifically to disruptions in spindle microtubule dynamics. The NDC80 complex synergistically enhances the affinity of the SKA1 complex for microtubules and may allow the NDC80 complex to track depolymerizing microtubules. The protein is Kinetochore protein Spc25 of Drosophila lutescens (Fruit fly).